A 92-amino-acid polypeptide reads, in one-letter code: Small ribosomal subunit protein uS19 (92 aa).

This sequence belongs to the universal ribosomal protein uS19 family.

Protein S19 forms a complex with S13 that binds strongly to the 16S ribosomal RNA. The protein is Small ribosomal subunit protein uS19 of Baumannia cicadellinicola subsp. Homalodisca coagulata.